The chain runs to 226 residues: Urease accessory protein UreG (226 aa).

Residues 1–26 (MPPHFLDGQPHGHTDRPRRVRQPGEP) are disordered. 33-40 (GPVGSGKT) provides a ligand contact to GTP.

It belongs to the SIMIBI class G3E GTPase family. UreG subfamily. Homodimer. UreD, UreF and UreG form a complex that acts as a GTP-hydrolysis-dependent molecular chaperone, activating the urease apoprotein by helping to assemble the nickel containing metallocenter of UreC. The UreE protein probably delivers the nickel.

The protein resides in the cytoplasm. Facilitates the functional incorporation of the urease nickel metallocenter. This process requires GTP hydrolysis, probably effectuated by UreG. This chain is Urease accessory protein UreG, found in Mycolicibacterium vanbaalenii (strain DSM 7251 / JCM 13017 / BCRC 16820 / KCTC 9966 / NRRL B-24157 / PYR-1) (Mycobacterium vanbaalenii).